The sequence spans 82 residues: Ubiquinol-cytochrome-c reductase complex assembly factor 3 (82 aa).

The Mitochondrial matrix portion of the chain corresponds to 1–6; the sequence is METVRR. The helical transmembrane segment at 7–29 threads the bilayer; sequence IVKGTLLLGFCTGIGGDLWVLVA. The Mitochondrial intermembrane portion of the chain corresponds to 30–82; the sequence is PGQERRLEMRMNYPEANPPMLAEAHKRNEMVLKVIEESAKTNENMARRSPWSS.

This sequence belongs to the UQCC3 family. As to quaternary structure, associates with the ubiquinol-cytochrome c reductase complex (mitochondrial respiratory chain complex III or cytochrome b-c1 complex).

It localises to the mitochondrion inner membrane. In terms of biological role, required for the assembly of the ubiquinol-cytochrome c reductase complex (mitochondrial respiratory chain complex III or cytochrome b-c1 complex), mediating cytochrome b recruitment and probably stabilization within the complex. Thereby, plays an important role in ATP production by mitochondria. Cardiolipin-binding protein, it may also control the cardiolipin composition of mitochondria membranes and their morphology. The protein is Ubiquinol-cytochrome-c reductase complex assembly factor 3 of Xenopus laevis (African clawed frog).